Here is a 555-residue protein sequence, read N- to C-terminus: Pyrophosphate--fructose 6-phosphate 1-phosphotransferase (555 aa).

A diphosphate-binding site is contributed by Gly82. A substrate-binding site is contributed by Arg146. Residue Asp176 coordinates Mg(2+). Residues 204-206 (TID), 243-244 (KY), 251-253 (MGR), Glu312, and 428-431 (YEGR) contribute to the substrate site. The active-site Proton acceptor is the Asp206.

The protein belongs to the phosphofructokinase type A (PFKA) family. PPi-dependent PFK group II subfamily. Clade 'Long' sub-subfamily. In terms of assembly, homodimer. Mg(2+) serves as cofactor.

It localises to the cytoplasm. It carries out the reaction beta-D-fructose 6-phosphate + diphosphate = beta-D-fructose 1,6-bisphosphate + phosphate + H(+). Its pathway is carbohydrate degradation; glycolysis; D-glyceraldehyde 3-phosphate and glycerone phosphate from D-glucose: step 3/4. Non-allosteric. In terms of biological role, catalyzes the phosphorylation of D-fructose 6-phosphate, the first committing step of glycolysis. Uses inorganic phosphate (PPi) as phosphoryl donor instead of ATP like common ATP-dependent phosphofructokinases (ATP-PFKs), which renders the reaction reversible, and can thus function both in glycolysis and gluconeogenesis. Consistently, PPi-PFK can replace the enzymes of both the forward (ATP-PFK) and reverse (fructose-bisphosphatase (FBPase)) reactions. This Borreliella burgdorferi (strain ATCC 35210 / DSM 4680 / CIP 102532 / B31) (Borrelia burgdorferi) protein is Pyrophosphate--fructose 6-phosphate 1-phosphotransferase.